The chain runs to 339 residues: Homeobox protein DBX2 (339 aa).

Positions 186-245 form a DNA-binding region, homeobox; it reads GILRRAVFSEDQRKALEKMFQKQKYISKTDRKKLAINLGLKESQVKIWFQNRRMKWRNSK. The disordered stretch occupies residues 282 to 318; the sequence is VPQQHSSPRWRENSPEPSERLIQESSGAPPPEANSLQ. Basic and acidic residues predominate over residues 290–303; sequence RWRENSPEPSERLI.

Belongs to the H2.0 homeobox family.

The protein resides in the nucleus. In Homo sapiens (Human), this protein is Homeobox protein DBX2 (DBX2).